A 419-amino-acid polypeptide reads, in one-letter code: Serine hydroxymethyltransferase (419 aa).

Residues leucine 120 and 124 to 126 (GHL) each bind (6S)-5,6,7,8-tetrahydrofolate. Lysine 229 bears the N6-(pyridoxal phosphate)lysine mark.

Belongs to the SHMT family. In terms of assembly, homodimer. It depends on pyridoxal 5'-phosphate as a cofactor.

It localises to the cytoplasm. The catalysed reaction is (6R)-5,10-methylene-5,6,7,8-tetrahydrofolate + glycine + H2O = (6S)-5,6,7,8-tetrahydrofolate + L-serine. It functions in the pathway one-carbon metabolism; tetrahydrofolate interconversion. It participates in amino-acid biosynthesis; glycine biosynthesis; glycine from L-serine: step 1/1. Catalyzes the reversible interconversion of serine and glycine with tetrahydrofolate (THF) serving as the one-carbon carrier. This reaction serves as the major source of one-carbon groups required for the biosynthesis of purines, thymidylate, methionine, and other important biomolecules. Also exhibits THF-independent aldolase activity toward beta-hydroxyamino acids, producing glycine and aldehydes, via a retro-aldol mechanism. This chain is Serine hydroxymethyltransferase, found in Herpetosiphon aurantiacus (strain ATCC 23779 / DSM 785 / 114-95).